Here is a 358-residue protein sequence, read N- to C-terminus: Magnesium-protoporphyrin IX monomethyl ester [oxidative] cyclase (358 aa).

The protein belongs to the AcsF family. The cofactor is Fe cation.

It carries out the reaction Mg-protoporphyrin IX 13-monomethyl ester + 3 NADPH + 3 O2 + 2 H(+) = 3,8-divinyl protochlorophyllide a + 3 NADP(+) + 5 H2O. The protein operates within porphyrin-containing compound metabolism; chlorophyll biosynthesis (light-independent). Catalyzes the formation of the isocyclic ring in chlorophyll biosynthesis. Mediates the cyclase reaction, which results in the formation of divinylprotochlorophyllide (Pchlide) characteristic of all chlorophylls from magnesium-protoporphyrin IX 13-monomethyl ester (MgPMME). The polypeptide is Magnesium-protoporphyrin IX monomethyl ester [oxidative] cyclase (Trichodesmium erythraeum (strain IMS101)).